Here is a 243-residue protein sequence, read N- to C-terminus: Tryptophan synthase alpha chain (243 aa).

Active-site proton acceptor residues include Glu32 and Asp43.

Belongs to the TrpA family. In terms of assembly, tetramer of two alpha and two beta chains.

It localises to the plastid. Its subcellular location is the chloroplast. It carries out the reaction (1S,2R)-1-C-(indol-3-yl)glycerol 3-phosphate + L-serine = D-glyceraldehyde 3-phosphate + L-tryptophan + H2O. Its pathway is amino-acid biosynthesis; L-tryptophan biosynthesis; L-tryptophan from chorismate: step 5/5. Functionally, the alpha subunit is responsible for the aldol cleavage of indoleglycerol phosphate to indole and glyceraldehyde 3-phosphate. This Cyanidioschyzon merolae (strain NIES-3377 / 10D) (Unicellular red alga) protein is Tryptophan synthase alpha chain.